Consider the following 103-residue polypeptide: UPF0145 protein Amet_0532 (103 aa).

It belongs to the UPF0145 family.

The protein is UPF0145 protein Amet_0532 of Alkaliphilus metalliredigens (strain QYMF).